The chain runs to 229 residues: Peptidase E (229 aa).

Catalysis depends on charge relay system residues Ser120, Asp135, and His157.

This sequence belongs to the peptidase S51 family.

Its subcellular location is the cytoplasm. It carries out the reaction Dipeptidase E catalyzes the hydrolysis of dipeptides Asp-|-Xaa. It does not act on peptides with N-terminal Glu, Asn or Gln, nor does it cleave isoaspartyl peptides.. In terms of biological role, hydrolyzes dipeptides containing N-terminal aspartate residues. May play a role in allowing the cell to use peptide aspartate to spare carbon otherwise required for the synthesis of the aspartate family of amino acids. This Salmonella arizonae (strain ATCC BAA-731 / CDC346-86 / RSK2980) protein is Peptidase E.